A 127-amino-acid polypeptide reads, in one-letter code: Competence protein ComGF (127 aa).

In terms of assembly, the transformation pili are flexible filaments, consisting mainly of the major pilin ComGC and smaller amounts of the minor pilins, including at least ComGD, ComGF and ComGG. Interacts with ComGD. Interacts with ComGG.

Its subcellular location is the cell membrane. It localises to the fimbrium. Required for formation of the type IV-like pilus (T4P) that plays a role in transformation. Involved in transformation. Transformation pili are dynamically extended and retracted, perhaps thereby promoting DNA uptake and transformation. Required for transformation and DNA binding. The sequence is that of Competence protein ComGF (comGF) from Bacillus subtilis (strain 168).